A 116-amino-acid chain; its full sequence is Small ribosomal subunit protein bS16 (116 aa).

Belongs to the bacterial ribosomal protein bS16 family.

This Chlamydia trachomatis serovar A (strain ATCC VR-571B / DSM 19440 / HAR-13) protein is Small ribosomal subunit protein bS16.